A 36-amino-acid polypeptide reads, in one-letter code: Photosystem II reaction center protein M (36 aa).

A helical membrane pass occupies residues 5-25 (ILGVIAVALFILIPTSFLLIL).

It belongs to the PsbM family. In terms of assembly, PSII is composed of 1 copy each of membrane proteins PsbA, PsbB, PsbC, PsbD, PsbE, PsbF, PsbH, PsbI, PsbJ, PsbK, PsbL, PsbM, PsbT, PsbY, PsbZ, Psb30/Ycf12, at least 3 peripheral proteins of the oxygen-evolving complex and a large number of cofactors. It forms dimeric complexes.

It localises to the plastid. The protein localises to the chloroplast thylakoid membrane. In terms of biological role, one of the components of the core complex of photosystem II (PSII). PSII is a light-driven water:plastoquinone oxidoreductase that uses light energy to abstract electrons from H(2)O, generating O(2) and a proton gradient subsequently used for ATP formation. It consists of a core antenna complex that captures photons, and an electron transfer chain that converts photonic excitation into a charge separation. This subunit is found at the monomer-monomer interface. The chain is Photosystem II reaction center protein M from Bigelowiella natans (Pedinomonas minutissima).